Reading from the N-terminus, the 83-residue chain is MSGTKKVGSAGRFGARYGLKIRRRVAAVEAKMRQKHTCPVCGRKAVKRISTGIWQCQKCGATFAGGAYLPVTPAGKAVRRITE.

The Zn(2+) site is built by Cys-38, Cys-41, Cys-56, and Cys-59. Residues Cys-38 to Cys-59 form a C4-type zinc finger.

It belongs to the eukaryotic ribosomal protein eL43 family. Putative zinc-binding subfamily. As to quaternary structure, part of the 50S ribosomal subunit. Requires Zn(2+) as cofactor.

Its function is as follows. Binds to the 23S rRNA. In Pyrococcus furiosus (strain ATCC 43587 / DSM 3638 / JCM 8422 / Vc1), this protein is Large ribosomal subunit protein eL43.